A 255-amino-acid polypeptide reads, in one-letter code: Proteasome subunit alpha type-3 (255 aa).

At serine 2 the chain carries N-acetylserine. Lysine 57, lysine 206, and lysine 230 each carry N6-acetyllysine. 2 positions are modified to phosphoserine: serine 243 and serine 250.

This sequence belongs to the peptidase T1A family. The 26S proteasome consists of a 20S proteasome core and two 19S regulatory subunits. The 20S proteasome core is a barrel-shaped complex made of 28 subunits that are arranged in four stacked rings. The two outer rings are each formed by seven alpha subunits, and the two inner rings are formed by seven beta subunits. The proteolytic activity is exerted by three beta-subunits PSMB5, PSMB6 and PSMB7. Interacts with AURKB. Interacts with CDKN1A. Interacts with MDM2 and RB1. Interacts with the C-terminus of TBXA2R isoform 2. Interacts with DNAJB2. As to quaternary structure, (Microbial infection) Interacts with HIV-1 Tat protein. In terms of assembly, (Microbial infection) Interacts with hepatitis C virus (HCV) F protein. (Microbial infection) Interacts with Epstein-Barr virus EBNA3 proteins.

The protein resides in the cytoplasm. Its subcellular location is the nucleus. In terms of biological role, component of the 20S core proteasome complex involved in the proteolytic degradation of most intracellular proteins. This complex plays numerous essential roles within the cell by associating with different regulatory particles. Associated with two 19S regulatory particles, forms the 26S proteasome and thus participates in the ATP-dependent degradation of ubiquitinated proteins. The 26S proteasome plays a key role in the maintenance of protein homeostasis by removing misfolded or damaged proteins that could impair cellular functions, and by removing proteins whose functions are no longer required. Associated with the PA200 or PA28, the 20S proteasome mediates ubiquitin-independent protein degradation. This type of proteolysis is required in several pathways including spermatogenesis (20S-PA200 complex) or generation of a subset of MHC class I-presented antigenic peptides (20S-PA28 complex). Binds to the C-terminus of CDKN1A and thereby mediates its degradation. Negatively regulates the membrane trafficking of the cell-surface thromboxane A2 receptor (TBXA2R) isoform 2. The sequence is that of Proteasome subunit alpha type-3 from Homo sapiens (Human).